A 120-amino-acid polypeptide reads, in one-letter code: MSNKNEALLRRKARVRRALKATANGRPRLSVFRSSKQIYVQVIDDAVGRTLAAASSLDKDLKASLKTGADKAAAEAVGKLVAERAKAAGVTKVVFDRSGYIFHGRVKALADAAREGGLDF.

The protein belongs to the universal ribosomal protein uL18 family. In terms of assembly, part of the 50S ribosomal subunit; part of the 5S rRNA/L5/L18/L25 subcomplex. Contacts the 5S and 23S rRNAs.

In terms of biological role, this is one of the proteins that bind and probably mediate the attachment of the 5S RNA into the large ribosomal subunit, where it forms part of the central protuberance. This Methylorubrum populi (strain ATCC BAA-705 / NCIMB 13946 / BJ001) (Methylobacterium populi) protein is Large ribosomal subunit protein uL18.